Here is a 295-residue protein sequence, read N- to C-terminus: CRISPR system Cmr endoribonuclease Cmr4 (295 aa).

It belongs to the CRISPR system Cmr4 family. In terms of assembly, forms oligomers in isolation. Part of the type III-B Cmr ribonucleoprotein (RNP) complex, an elongated RNP with Cmr2 and Cmr3 as the base, with Cmr4 and Cmr5 forming a helical core along the mature crRNA (39 or 45 nt in length), while the complex is capped by Cmr6 and Cmr1. The 5' end of the crRNA is bound to Cmr2 and Cmr3, while Cmr6 and a Cmr1 subunit (Cmr1-1 or Cmr1-2) cap the 3' end of the crRNA. The target RNA lies anti-parallel to the crRNA, with its 5' end near Cmr1 and Cmr6 and its 3' end near Cmr2 and Cmr3; major target RNA cleavage occurs nears the junction of Cmr1/Cmr6 and Cmr4/Cmr5, with minor cleavage occurring at 6 nt intervals which coincide with the proposed spacing of Cmr4 subunits. Interacts with Cmr5. Interacts with Cmr2, Cmr3, Cmr5 and Cmr6.

It is found in the cytoplasm. In terms of biological role, CRISPR (clustered regularly interspaced short palindromic repeat), is an adaptive immune system that provides protection against mobile genetic elements (viruses, transposable elements and conjugative plasmids). CRISPR clusters contain sequences complementary to antecedent mobile elements and target invading nucleic acids. CRISPR clusters are transcribed and processed into CRISPR RNA (crRNA), formerly called psiRNA (prokaryotic silencing) in this organism. Part of the Cmr ribonucleoprotein complex which has divalent cation-dependent endoribonuclease activity specific for ssRNA complementary to the crRNA (target RNA), generating 5' hydroxy- and 3' phosphate or 2'-3' cyclic phosphate termini. This is probably the subunit that cleaves the target RNA. Cmr complex does not cleave ssDNA complementary to the crRNA. Cleavage of target RNA is guided by the crRNA; substrate cleavage occurs a fixed distance (14 nt) from the 3' end of the crRNA. In vitro reconstitution shows Cmr1-2 and Cmr5 are not absolutely necessary for target cleavage. In Pyrococcus furiosus (strain ATCC 43587 / DSM 3638 / JCM 8422 / Vc1), this protein is CRISPR system Cmr endoribonuclease Cmr4.